The following is a 614-amino-acid chain: Glutamyl-tRNA(Gln) amidotransferase subunit E (614 aa).

Belongs to the GatB/GatE family. GatE subfamily. In terms of assembly, heterodimer of GatD and GatE.

The catalysed reaction is L-glutamyl-tRNA(Gln) + L-glutamine + ATP + H2O = L-glutaminyl-tRNA(Gln) + L-glutamate + ADP + phosphate + H(+). Its function is as follows. Allows the formation of correctly charged Gln-tRNA(Gln) through the transamidation of misacylated Glu-tRNA(Gln) in organisms which lack glutaminyl-tRNA synthetase. The reaction takes place in the presence of glutamine and ATP through an activated gamma-phospho-Glu-tRNA(Gln). The GatDE system is specific for glutamate and does not act on aspartate. The sequence is that of Glutamyl-tRNA(Gln) amidotransferase subunit E from Methanospirillum hungatei JF-1 (strain ATCC 27890 / DSM 864 / NBRC 100397 / JF-1).